Consider the following 99-residue polypeptide: U1-theraphotoxin-Lsp1a (99 aa).

The first 23 residues, 1-23, serve as a signal peptide directing secretion; the sequence is MRSLTLAALLLCSLLLVFHTSAA. The propeptide occupies 24–50; that stretch reads AELEAQEGHLMIPGDTDTALETVDDER. Cystine bridges form between C54/C67, C58/C91, C72/C74, and C85/C96.

It belongs to the neurotoxin 12 (Hwtx-2) family. 04 (lasiotoxin) subfamily. In terms of tissue distribution, expressed by the venom gland.

The protein localises to the secreted. In terms of biological role, toxin that causes irreversible contractile paralysis into adult Aedes aegypti resulting in 100% mortality after 24 hours. The sequence is that of U1-theraphotoxin-Lsp1a from Lasiodora sp. (strain IBSP 8539) (Brazilian salmon pink birdeater).